The chain runs to 256 residues: Hydroxyethylthiazole kinase (256 aa).

Met-38 serves as a coordination point for substrate. Residues Arg-114 and Thr-159 each coordinate ATP. Gly-186 contributes to the substrate binding site.

Belongs to the Thz kinase family. Mg(2+) is required as a cofactor.

The catalysed reaction is 5-(2-hydroxyethyl)-4-methylthiazole + ATP = 4-methyl-5-(2-phosphooxyethyl)-thiazole + ADP + H(+). It participates in cofactor biosynthesis; thiamine diphosphate biosynthesis; 4-methyl-5-(2-phosphoethyl)-thiazole from 5-(2-hydroxyethyl)-4-methylthiazole: step 1/1. In terms of biological role, catalyzes the phosphorylation of the hydroxyl group of 4-methyl-5-beta-hydroxyethylthiazole (THZ). The sequence is that of Hydroxyethylthiazole kinase from Streptococcus agalactiae serotype III (strain NEM316).